The primary structure comprises 122 residues: Holo-[acyl-carrier-protein] synthase (122 aa).

The Mg(2+) site is built by aspartate 8 and glutamate 56.

The protein belongs to the P-Pant transferase superfamily. AcpS family. Mg(2+) is required as a cofactor.

It is found in the cytoplasm. The enzyme catalyses apo-[ACP] + CoA = holo-[ACP] + adenosine 3',5'-bisphosphate + H(+). In terms of biological role, transfers the 4'-phosphopantetheine moiety from coenzyme A to a Ser of acyl-carrier-protein. The sequence is that of Holo-[acyl-carrier-protein] synthase from Streptomyces griseus subsp. griseus (strain JCM 4626 / CBS 651.72 / NBRC 13350 / KCC S-0626 / ISP 5235).